Reading from the N-terminus, the 540-residue chain is GMP synthase [glutamine-hydrolyzing] (540 aa).

In terms of domain architecture, Glutamine amidotransferase type-1 spans 26–216; sequence IIIILDFGSQ…VYHICECEPT (191 aa). Cys-103 serves as the catalytic Nucleophile. Residues His-190 and Glu-192 contribute to the active site. Residues 217-415 enclose the GMPS ATP-PPase domain; sequence WTTAAFVEEA…VGLPEEIVQR (199 aa). An ATP-binding site is contributed by 244–250; sequence SGGVDSS.

Homodimer.

The catalysed reaction is XMP + L-glutamine + ATP + H2O = GMP + L-glutamate + AMP + diphosphate + 2 H(+). It functions in the pathway purine metabolism; GMP biosynthesis; GMP from XMP (L-Gln route): step 1/1. Its function is as follows. Catalyzes the synthesis of GMP from XMP. This chain is GMP synthase [glutamine-hydrolyzing], found in Nostoc sp. (strain PCC 7120 / SAG 25.82 / UTEX 2576).